Reading from the N-terminus, the 256-residue chain is MGKTKDIGDDDTVASEFWSGALSQPSSVPTRPRTPNRDSWRRAWAARGLHPRPSILQPGPARLSRARAGGTRCPQRRHGRATFCALGRGIGVRRGPGPRPARIPGLTLTWKRMSARRMQWAMQTGGRNQTFGGGVPLFWTWLTICCAVWRSLPCRLTHSCSRAFSSAPLKKTKSSMLPPKQALASAARNLCRGAGCNRQAVAGQLLPSTWSLHAHGLAKEAPILPVKKISRSCSVNNKVSKKTTKPPTLRSFLSPI.

Disordered stretches follow at residues 1–38 (MGKT…PNRD) and 51–75 (PRPS…RCPQ).

This is an uncharacterized protein from Homo sapiens (Human).